A 284-amino-acid polypeptide reads, in one-letter code: Phosphatidylglycerol--prolipoprotein diacylglyceryl transferase (284 aa).

A run of 7 helical transmembrane segments spans residues 14-34 (IAFS…ACAI), 62-82 (YFLW…ILIY), 106-126 (FVGI…IASY), 136-156 (LLIY…FGRI), 190-210 (PSQL…VMWA), 218-238 (GLLI…AEFY), and 252-272 (LSMG…ILLY). Arginine 155 is an a 1,2-diacyl-sn-glycero-3-phospho-(1'-sn-glycerol) binding site.

Belongs to the Lgt family.

The protein resides in the cell inner membrane. The enzyme catalyses L-cysteinyl-[prolipoprotein] + a 1,2-diacyl-sn-glycero-3-phospho-(1'-sn-glycerol) = an S-1,2-diacyl-sn-glyceryl-L-cysteinyl-[prolipoprotein] + sn-glycerol 1-phosphate + H(+). The protein operates within protein modification; lipoprotein biosynthesis (diacylglyceryl transfer). Functionally, catalyzes the transfer of the diacylglyceryl group from phosphatidylglycerol to the sulfhydryl group of the N-terminal cysteine of a prolipoprotein, the first step in the formation of mature lipoproteins. In Helicobacter pylori (strain ATCC 700392 / 26695) (Campylobacter pylori), this protein is Phosphatidylglycerol--prolipoprotein diacylglyceryl transferase.